Consider the following 106-residue polypeptide: Pyrimidine/purine nucleoside phosphorylase (106 aa).

It belongs to the nucleoside phosphorylase PpnP family.

It catalyses the reaction a purine D-ribonucleoside + phosphate = a purine nucleobase + alpha-D-ribose 1-phosphate. The catalysed reaction is adenosine + phosphate = alpha-D-ribose 1-phosphate + adenine. The enzyme catalyses cytidine + phosphate = cytosine + alpha-D-ribose 1-phosphate. It carries out the reaction guanosine + phosphate = alpha-D-ribose 1-phosphate + guanine. It catalyses the reaction inosine + phosphate = alpha-D-ribose 1-phosphate + hypoxanthine. The catalysed reaction is thymidine + phosphate = 2-deoxy-alpha-D-ribose 1-phosphate + thymine. The enzyme catalyses uridine + phosphate = alpha-D-ribose 1-phosphate + uracil. It carries out the reaction xanthosine + phosphate = alpha-D-ribose 1-phosphate + xanthine. Catalyzes the phosphorolysis of diverse nucleosides, yielding D-ribose 1-phosphate and the respective free bases. Can use uridine, adenosine, guanosine, cytidine, thymidine, inosine and xanthosine as substrates. Also catalyzes the reverse reactions. This Burkholderia multivorans (strain ATCC 17616 / 249) protein is Pyrimidine/purine nucleoside phosphorylase.